We begin with the raw amino-acid sequence, 334 residues long: Holliday junction branch migration complex subunit RuvB (334 aa).

A large ATPase domain (RuvB-L) region spans residues Met-1–Tyr-182. Residues Leu-21, Arg-22, Gly-63, Lys-66, Thr-67, Thr-68, Glu-129–Phe-131, Arg-172, Tyr-182, and Arg-219 each bind ATP. Residue Thr-67 participates in Mg(2+) binding. Residues Glu-183–Gln-253 are small ATPAse domain (RuvB-S). The segment at Lys-256–Asp-334 is head domain (RuvB-H). Residues Arg-311 and Arg-316 each coordinate DNA.

This sequence belongs to the RuvB family. In terms of assembly, homohexamer. Forms an RuvA(8)-RuvB(12)-Holliday junction (HJ) complex. HJ DNA is sandwiched between 2 RuvA tetramers; dsDNA enters through RuvA and exits via RuvB. An RuvB hexamer assembles on each DNA strand where it exits the tetramer. Each RuvB hexamer is contacted by two RuvA subunits (via domain III) on 2 adjacent RuvB subunits; this complex drives branch migration. In the full resolvosome a probable DNA-RuvA(4)-RuvB(12)-RuvC(2) complex forms which resolves the HJ.

The protein resides in the cytoplasm. The enzyme catalyses ATP + H2O = ADP + phosphate + H(+). The RuvA-RuvB-RuvC complex processes Holliday junction (HJ) DNA during genetic recombination and DNA repair, while the RuvA-RuvB complex plays an important role in the rescue of blocked DNA replication forks via replication fork reversal (RFR). RuvA specifically binds to HJ cruciform DNA, conferring on it an open structure. The RuvB hexamer acts as an ATP-dependent pump, pulling dsDNA into and through the RuvAB complex. RuvB forms 2 homohexamers on either side of HJ DNA bound by 1 or 2 RuvA tetramers; 4 subunits per hexamer contact DNA at a time. Coordinated motions by a converter formed by DNA-disengaged RuvB subunits stimulates ATP hydrolysis and nucleotide exchange. Immobilization of the converter enables RuvB to convert the ATP-contained energy into a lever motion, pulling 2 nucleotides of DNA out of the RuvA tetramer per ATP hydrolyzed, thus driving DNA branch migration. The RuvB motors rotate together with the DNA substrate, which together with the progressing nucleotide cycle form the mechanistic basis for DNA recombination by continuous HJ branch migration. Branch migration allows RuvC to scan DNA until it finds its consensus sequence, where it cleaves and resolves cruciform DNA. The chain is Holliday junction branch migration complex subunit RuvB from Bacillus pumilus (strain SAFR-032).